The following is a 488-amino-acid chain: Glutamyl-tRNA(Gln) amidotransferase subunit A (488 aa).

Residues K77 and S152 each act as charge relay system in the active site. S176 (acyl-ester intermediate) is an active-site residue.

Belongs to the amidase family. GatA subfamily. In terms of assembly, heterotrimer of A, B and C subunits.

It catalyses the reaction L-glutamyl-tRNA(Gln) + L-glutamine + ATP + H2O = L-glutaminyl-tRNA(Gln) + L-glutamate + ADP + phosphate + H(+). In terms of biological role, allows the formation of correctly charged Gln-tRNA(Gln) through the transamidation of misacylated Glu-tRNA(Gln) in organisms which lack glutaminyl-tRNA synthetase. The reaction takes place in the presence of glutamine and ATP through an activated gamma-phospho-Glu-tRNA(Gln). The sequence is that of Glutamyl-tRNA(Gln) amidotransferase subunit A from Streptococcus pyogenes serotype M18 (strain MGAS8232).